The chain runs to 328 residues: Methionine import ATP-binding protein MetN 1 (328 aa).

In terms of domain architecture, ABC transporter spans 2 to 241 (ISIERLSKTY…PLSRLGRSLL (240 aa)). ATP is bound at residue 38–45 (GRSGAGKS).

This sequence belongs to the ABC transporter superfamily. Methionine importer (TC 3.A.1.24) family. The complex is composed of two ATP-binding proteins (MetN), two transmembrane proteins (MetI) and a solute-binding protein (MetQ).

It is found in the cell inner membrane. It catalyses the reaction L-methionine(out) + ATP + H2O = L-methionine(in) + ADP + phosphate + H(+). It carries out the reaction D-methionine(out) + ATP + H2O = D-methionine(in) + ADP + phosphate + H(+). Part of the ABC transporter complex MetNIQ involved in methionine import. Responsible for energy coupling to the transport system. The sequence is that of Methionine import ATP-binding protein MetN 1 from Yersinia pestis bv. Antiqua (strain Nepal516).